Reading from the N-terminus, the 325-residue chain is Thiamine-monophosphate kinase (325 aa).

4 residues coordinate Mg(2+): Asp-30, Ser-45, Thr-46, and Asp-47. His-54 provides a ligand contact to substrate. Asp-75 and Asp-122 together coordinate Mg(2+). Residues 121–122 (GD) and Arg-146 each bind ATP. Asp-212 serves as a coordination point for Mg(2+). Residue Ser-214 participates in ATP binding. Asp-215 lines the Mg(2+) pocket. Substrate is bound by residues Glu-263 and Tyr-319.

This sequence belongs to the thiamine-monophosphate kinase family.

It catalyses the reaction thiamine phosphate + ATP = thiamine diphosphate + ADP. Its pathway is cofactor biosynthesis; thiamine diphosphate biosynthesis; thiamine diphosphate from thiamine phosphate: step 1/1. Is markedly activated by the monovalent cations K(+), NH(4)(+), and Rb(+). Is significantly inhibited by ADP, AMP, p-chloromercuribenzoate, N-ethylmaleimide, pyrophosphate, and EDTA. Catalyzes the ATP-dependent phosphorylation of thiamine-monophosphate (TMP) to form thiamine-pyrophosphate (TPP), the active form of vitamin B1. Cannot use thiamine as substrate. Is highly specific for ATP as phosphate donor. The chain is Thiamine-monophosphate kinase (thiL) from Escherichia coli (strain K12).